The following is a 148-amino-acid chain: 3-dehydroquinate dehydratase (148 aa).

Residue Tyr22 is the Proton acceptor of the active site. Substrate-binding residues include Asn73, His79, and Asp86. The Proton donor role is filled by His99. Substrate-binding positions include 100 to 101 and Arg110; that span reads LS.

The protein belongs to the type-II 3-dehydroquinase family. In terms of assembly, homododecamer.

It carries out the reaction 3-dehydroquinate = 3-dehydroshikimate + H2O. Its pathway is metabolic intermediate biosynthesis; chorismate biosynthesis; chorismate from D-erythrose 4-phosphate and phosphoenolpyruvate: step 3/7. Catalyzes a trans-dehydration via an enolate intermediate. The chain is 3-dehydroquinate dehydratase from Jannaschia sp. (strain CCS1).